We begin with the raw amino-acid sequence, 594 residues long: UvrABC system protein C (594 aa).

The GIY-YIG domain occupies 15–92; sequence DKPGCYQMKN…IQKFQPYYNI (78 aa). One can recognise a UVR domain in the interval 197–232; sequence AKIKQSLQTKMQKASEAMEFERAADIRDQIHYIEVT.

It belongs to the UvrC family. As to quaternary structure, interacts with UvrB in an incision complex.

It localises to the cytoplasm. The UvrABC repair system catalyzes the recognition and processing of DNA lesions. UvrC both incises the 5' and 3' sides of the lesion. The N-terminal half is responsible for the 3' incision and the C-terminal half is responsible for the 5' incision. The chain is UvrABC system protein C from Pediococcus pentosaceus (strain ATCC 25745 / CCUG 21536 / LMG 10740 / 183-1w).